Consider the following 169-residue polypeptide: Diuretic hormone 44 (169 aa).

A signal peptide spans methionine 1–serine 18. Positions alanine 19 to arginine 96 are excised as a propeptide. Residues methionine 83–isoleucine 108 adopt a coiled-coil conformation. Glutamine 97 carries the pyrrolidone carboxylic acid modification. At isoleucine 108 the chain carries Isoleucine amide. The propeptide occupies glycine 109–leucine 169.

In terms of processing, residues Ile-66 to Gly-109 may constitute another form of the DH44 peptide, which has not been detected yet. In terms of tissue distribution, expressed in brain, ventral ganglia and the retrocerebral complex (at protein level).

The protein resides in the secreted. Its function is as follows. Regulation of fluid secretion. The chain is Diuretic hormone 44 from Camponotus floridanus (Florida carpenter ant).